The following is a 250-amino-acid chain: MANRLAGKVALITGGASGLGAAQAKRFAEEGAKVVIGDLNEEMAKGVVAEIRAAGGDALFIRLDVTDAASWNNAIAAAVEAFGGLTTLSNTAGIIHPGGFEEESIEGWNKMVAVNQTAIFLGIKAAIPELVKSGNGSIINISSLIGMFPTAGNASYCATKAAVRIMSKAAALEFVDRGVRVNTIVPGGMNTPITANVPPDVLKQQTSQIPMGKLGDPIDIANGALFLASDEAKYITGVDLPIDGGWSVGV.

NAD(+) contacts are provided by aspartate 38, aspartate 64, valine 65, tyrosine 156, lysine 160, threonine 191, and threonine 194. The active-site Proton acceptor is the tyrosine 156.

The protein belongs to the short-chain dehydrogenases/reductases (SDR) family.

The enzyme catalyses 2,5-dichlorocyclohexa-2,5-dien-1,4-diol + NAD(+) = 2,5-dichlorohydroquinone + NADH + H(+). Catalyzes the degradation of 2,5-dichloro-2,5-cyclohexadiene-1,4-diol (2,5-DDOL) into 2,5-dichlorohydroquinone (2,5-DCHQ) in vitro. LinX appears not to be involved in gamma-hexachlorocyclohexane (gamma-HCH) degradation pathway, in contrast to LinC which has the same enzymatic activity. The protein is 2,5-dichloro-2,5-cyclohexadiene-1,4-diol dehydrogenase LinX of Sphingobium indicum (strain DSM 16412 / CCM 7286 / MTCC 6364 / B90A).